We begin with the raw amino-acid sequence, 366 residues long: Tripartite motif-containing protein 54 (366 aa).

The RING-type zinc finger occupies 26–82; sequence CPICLEMFSKPVVILPCQHNLCRKCANDVFQASNPLWQSRSSTTVSSGGRFRCPSCR. The B box-type zinc finger occupies 121-163; the sequence is EQHLMCEEHEDEKINIYCLSCEVPTCSLCKVFGAHKDCEVAPL. Residues Cys-126, His-129, Cys-149, and His-155 each contribute to the Zn(2+) site. Residues 168-211 form a mediates microtubule-binding and homooligomerization region; that stretch reads KRQKSELSDGIAMLVAGNDRVQAVITQMEEVCQTIEENSRRQKQ. The stretch at 185–258 forms a coiled coil; sequence NDRVQAVITQ…LIRQYGDHLE (74 aa). A COS domain is found at 271-329; that stretch reads MEEPQMALYLQQAKELINKVGTMSKVELAGRPEPGYERMDQFTVSVEHVAEMLRTIDFQ. Residues 326 to 366 are disordered; the sequence is IDFQPGTSGEEEDEEVAVEGEEGNAGPEEERTDGRESTGQH. Residues 334–347 show a composition bias toward acidic residues; sequence GEEEDEEVAVEGEE. Basic and acidic residues predominate over residues 353 to 366; it reads EEERTDGRESTGQH.

In terms of assembly, homooligomer and heterooligomer. Interacts with TRIM63 and probably with TRIM55. Interacts with tubulin.

It localises to the cytoplasm. It is found in the cytoskeleton. The protein localises to the myofibril. Its subcellular location is the sarcomere. The protein resides in the z line. Its function is as follows. May bind and stabilize microtubules during myotubes formation. The chain is Tripartite motif-containing protein 54 (TRIM54) from Bos taurus (Bovine).